The chain runs to 298 residues: Protoheme IX farnesyltransferase (298 aa).

A run of 9 helical transmembrane segments spans residues 16 to 36, 45 to 65, 93 to 113, 114 to 134, 141 to 161, 172 to 192, 218 to 238, 241 to 261, and 277 to 297; these read VVAL…PDMP, ALGF…NQLL, VFAG…VNVI, TAVL…VYLK, IVIG…AVTG, SLLV…LAIF, ILVY…VGMS, FYLG…WRML, and IVYL…LPWV.

It belongs to the UbiA prenyltransferase family. Protoheme IX farnesyltransferase subfamily.

Its subcellular location is the cell inner membrane. The enzyme catalyses heme b + (2E,6E)-farnesyl diphosphate + H2O = Fe(II)-heme o + diphosphate. Its pathway is porphyrin-containing compound metabolism; heme O biosynthesis; heme O from protoheme: step 1/1. Converts heme B (protoheme IX) to heme O by substitution of the vinyl group on carbon 2 of heme B porphyrin ring with a hydroxyethyl farnesyl side group. The chain is Protoheme IX farnesyltransferase from Xanthomonas axonopodis pv. citri (strain 306).